Here is a 722-residue protein sequence, read N- to C-terminus: ORC ubiquitin ligase 1 (722 aa).

The RING-type; degenerate zinc finger occupies 18–56 (CHICLGKVRQPVVCTNNHVFCSICIDLWLKNNSQCPACR). Coiled-coil stretches lie at residues 87-129 (LRKT…TILD) and 157-267 (VVEW…KEDV). Ser-210 carries the phosphoserine modification. Residues 273 to 359 (RAPSADSKGP…RLGARETPMD (87 aa)) form a disordered region. Positions 302-319 (AGSASASHLASPSSSRLA) are enriched in low complexity. The segment covering 323–338 (SVRQESTSRTEPNCPQ) has biased composition (polar residues). Basic and acidic residues predominate over residues 339 to 359 (NKDRYPKPTEPRLGARETPMD). Residues Ser-522, Ser-549, Ser-557, Ser-564, and Ser-566 each carry the phosphoserine modification. Residues 541–555 (MSESDNSKSPCNNGF) are compositionally biased toward polar residues. Disordered regions lie at residues 541 to 585 (MSES…GSKL) and 691 to 722 (VPEK…ATKS). The span at 571–581 (EFLEEPDKLQE) shows a compositional bias: basic and acidic residues. The segment covering 698 to 722 (NGNQSTKRKIQSSLANASPSKATKS) has biased composition (polar residues). Residues Ser-715 and Ser-717 each carry the phosphoserine modification.

As to quaternary structure, associates with ORC complex. Binds to chromatin; association is cell cycle-regulated, absent from mitotic chromosomes, is associated with chromatin from G1 and partially released from chromatin from mid S-phase. Post-translationally, auto-ubiquitinated.

The protein localises to the chromosome. It catalyses the reaction S-ubiquitinyl-[E2 ubiquitin-conjugating enzyme]-L-cysteine + [acceptor protein]-L-lysine = [E2 ubiquitin-conjugating enzyme]-L-cysteine + N(6)-ubiquitinyl-[acceptor protein]-L-lysine.. E3 ubiquitin ligase essential for DNA replication origin activation during S phase. Acts as a replication origin selector which selects the origins to be fired and catalyzes the multi-mono-ubiquitination of a subset of chromatin-bound ORC3 and ORC5 during S-phase. The protein is ORC ubiquitin ligase 1 of Mus musculus (Mouse).